The sequence spans 83 residues: UPF0297 protein Moth_1643 (83 aa).

This sequence belongs to the UPF0297 family.

The polypeptide is UPF0297 protein Moth_1643 (Moorella thermoacetica (strain ATCC 39073 / JCM 9320)).